Here is a 190-residue protein sequence, read N- to C-terminus: Ras-like GTP-binding protein RhoL (190 aa).

A GTP-binding site is contributed by 18 to 25 (GDGMVGKT). An Effector region motif is present at residues 40 to 48 (YIPTVFDNH). GTP-binding positions include 65–69 (DTAGQ) and 123–126 (TKLD). Cys187 carries the cysteine methyl ester modification. A lipid anchor (S-geranylgeranyl cysteine) is attached at Cys187. The propeptide at 188-190 (KIL) is removed in mature form.

Belongs to the small GTPase superfamily. Rho family. In terms of tissue distribution, highly expressed in the embryonic cephalic mesoderm starting from stage 6 and fading by stage 11. Hemocyte precursor cells.

It is found in the cell membrane. In terms of biological role, essential for the maturation of hemocytes. This chain is Ras-like GTP-binding protein RhoL (RhoL), found in Drosophila melanogaster (Fruit fly).